Reading from the N-terminus, the 563-residue chain is MANAISNPASFIGVHSPIAQIRIPRLCVAKGMPTPIAQRDIILQDQIQLENTCIRHAKALKEARLAFSKVRKDHSQNLIMIDALQRLGIDYHFQEETQDVLEGQYNKIFAAHQQHHLSDAALRFRLLRQQGYYVPASDVFSELKNREGKFKQELAADIKGLMELYEASQLSIQEENILDEAGAFSAHFLNCWTPHLCDHQTRIVSNTLKHPFHRTLARSTIKNFLHFYNFQGENEYIQTFTELAKLDFNMIQSIHRQEINQVSNWWNNLGLASELKFARDQPEKWCMWPLVGVTDPSLSWQRIELAKPVSLVYLIDDIFDLGGTPDQLTLFTEAVNRWEITATEDLPYHMKICFRALYDVTNQIAYKVYKKHQYNPIHSLKKAWARLCNAFLEEAKWFAAGKLPKADEYLNTAIVTSGVHLVLVHTFFLMGDGITDQTINLLNNDDPGIISSVATILRLWDDLGSAQDENQDGYDGSYIECYMKDFPGTSVRDARNHVISMISDTWKKLNQHCLSPNPFSGSFIRATLNGARMVPLMYDFDSNHNLPILQQNIKSLLFESVAI.

Positions 316, 320, and 469 each coordinate Mg(2+). The short motif at 316–320 is the DDXXD motif element; the sequence is DDIFD.

Belongs to the terpene synthase family. Requires Mg(2+) as cofactor.

In terms of biological role, probable sesquiterpene synthase. This chain is Probable terpene synthase 4 (TPS4), found in Ricinus communis (Castor bean).